The primary structure comprises 54 residues: Large ribosomal subunit protein bL32 (54 aa).

Residues 1-26 are disordered; sequence MAVQKNKPTRSKRGMRRSHDSLTAPH. A compositionally biased stretch (basic residues) spans 7–16; that stretch reads KPTRSKRGMR.

Belongs to the bacterial ribosomal protein bL32 family.

The sequence is that of Large ribosomal subunit protein bL32 from Buchnera aphidicola subsp. Acyrthosiphon pisum (strain 5A).